The chain runs to 210 residues: CASP-like protein 3A2 (210 aa).

The Cytoplasmic segment spans residues 1 to 45; sequence MMMNGQKMAAAEVAVQLPESKMVTENIGGAAAAMRPFGRKAEVMN. Residues 46–66 traverse the membrane as a helical segment; sequence VLLRVLCMVTSVAALSSMVTA. Residues 67–92 are Extracellular-facing; the sequence is QQSSTVSIYGFMLPIQSKWSFSHSFE. Residues 93–113 form a helical membrane-spanning segment; that stretch reads YVVGVSAVVAAHSLLQLLISV. At 114–128 the chain is on the cytoplasmic side; it reads SRLLRKSPVIQSRSH. The helical transmembrane segment at 129–149 threads the bilayer; the sequence is AWLVFAGDQVFAYAMISAGAA. Residues 150 to 178 are Extracellular-facing; the sequence is ASGVTNLNRTGIRHTALPNFCKPLQSFCD. N157 is a glycosylation site (N-linked (GlcNAc...) asparagine). A helical transmembrane segment spans residues 179–199; the sequence is HVAVSIFFTFLSCFLLAASAV. At 200-210 the chain is on the cytoplasmic side; it reads QEVIWLSRSKY.

This sequence belongs to the Casparian strip membrane proteins (CASP) family. As to quaternary structure, homodimer and heterodimers.

It is found in the cell membrane. This is CASP-like protein 3A2 from Populus trichocarpa (Western balsam poplar).